The following is a 494-amino-acid chain: Probable cytosol aminopeptidase (494 aa).

Mn(2+) is bound by residues K260 and D265. K272 is a catalytic residue. Mn(2+)-binding residues include D283, D342, and E344. R346 is an active-site residue.

This sequence belongs to the peptidase M17 family. Requires Mn(2+) as cofactor.

The protein localises to the cytoplasm. It catalyses the reaction Release of an N-terminal amino acid, Xaa-|-Yaa-, in which Xaa is preferably Leu, but may be other amino acids including Pro although not Arg or Lys, and Yaa may be Pro. Amino acid amides and methyl esters are also readily hydrolyzed, but rates on arylamides are exceedingly low.. It carries out the reaction Release of an N-terminal amino acid, preferentially leucine, but not glutamic or aspartic acids.. Presumably involved in the processing and regular turnover of intracellular proteins. Catalyzes the removal of unsubstituted N-terminal amino acids from various peptides. This is Probable cytosol aminopeptidase from Bacillus thuringiensis (strain Al Hakam).